The chain runs to 251 residues: Methionine aminopeptidase (251 aa).

Substrate is bound at residue H79. Residues D96, D107, and H170 each coordinate a divalent metal cation. H177 contributes to the substrate binding site. A divalent metal cation-binding residues include E204 and E235.

The protein belongs to the peptidase M24A family. Methionine aminopeptidase type 1 subfamily. In terms of assembly, monomer. Co(2+) serves as cofactor. The cofactor is Zn(2+). It depends on Mn(2+) as a cofactor. Fe(2+) is required as a cofactor.

It carries out the reaction Release of N-terminal amino acids, preferentially methionine, from peptides and arylamides.. In terms of biological role, removes the N-terminal methionine from nascent proteins. The N-terminal methionine is often cleaved when the second residue in the primary sequence is small and uncharged (Met-Ala-, Cys, Gly, Pro, Ser, Thr, or Val). Requires deformylation of the N(alpha)-formylated initiator methionine before it can be hydrolyzed. This Borreliella burgdorferi (strain ATCC 35210 / DSM 4680 / CIP 102532 / B31) (Borrelia burgdorferi) protein is Methionine aminopeptidase.